The sequence spans 161 residues: Putative 4-hydroxy-4-methyl-2-oxoglutarate aldolase (161 aa).

Substrate-binding positions include 75 to 78 (GDML) and Arg-97. Asp-98 contributes to the a divalent metal cation binding site.

The protein belongs to the class II aldolase/RraA-like family. Homotrimer. Requires a divalent metal cation as cofactor.

It carries out the reaction 4-hydroxy-4-methyl-2-oxoglutarate = 2 pyruvate. It catalyses the reaction oxaloacetate + H(+) = pyruvate + CO2. Functionally, catalyzes the aldol cleavage of 4-hydroxy-4-methyl-2-oxoglutarate (HMG) into 2 molecules of pyruvate. Also contains a secondary oxaloacetate (OAA) decarboxylase activity due to the common pyruvate enolate transition state formed following C-C bond cleavage in the retro-aldol and decarboxylation reactions. This chain is Putative 4-hydroxy-4-methyl-2-oxoglutarate aldolase, found in Marinomonas sp. (strain MWYL1).